A 389-amino-acid polypeptide reads, in one-letter code: Chitinase-3-like protein 1 (389 aa).

The N-terminal stretch at 1–29 (MHTSTEARMGMRAALTGFAVLMLLQSCSA) is a signal peptide. A GH18 domain is found at 30–389 (YKLVCYFTSW…LTNAIKDALA (360 aa)). Cysteines 34 and 59 form a disulfide. An N-linked (GlcNAc...) asparagine glycan is attached at N68. Chitin contacts are provided by residues 79 to 80 (EW), 106 to 109 (GGWK), Y150, and 213 to 216 (MTYD). Cysteines 309 and 372 form a disulfide. The segment at 333–347 (QWVGYEDKESVKNKV) is important for AKT1 activation and IL8 production. W361 is a binding site for chitin.

Belongs to the glycosyl hydrolase 18 family. In terms of assembly, monomer. In terms of tissue distribution, detected in lung in pulmonary macrophages and alveolar type 2 cells and in bronchoalveolar lavage (BAL) fluids. Expressed in mammary tumor cells (at protein level). Expressed in lung. Not detected in non-inflammatory colon.

Its subcellular location is the secreted. It is found in the extracellular space. The protein resides in the cytoplasm. The protein localises to the endoplasmic reticulum. Functionally, carbohydrate-binding lectin with a preference for chitin. Has no chitinase activity. May play a role in tissue remodeling and in the capacity of cells to respond to and cope with changes in their environment. Plays a role in T-helper cell type 2 (Th2) inflammatory response and IL-13-induced inflammation, regulating allergen sensitization, inflammatory cell apoptosis, dendritic cell accumulation and M2 macrophage differentiation. Facilitates invasion of pathogenic enteric bacteria into colonic mucosa and lymphoid organs. Mediates activation of AKT1 signaling pathway and subsequent IL8 production in colonic epithelial cells. Regulates antibacterial responses in lung by contributing to macrophage bacterial killing, controlling bacterial dissemination and augmenting host tolerance. Also regulates hyperoxia-induced injury, inflammation and epithelial apoptosis in lung. The sequence is that of Chitinase-3-like protein 1 (Chi3l1) from Mus musculus (Mouse).